The primary structure comprises 105 residues: Endoribonuclease MazF1 (105 aa).

This sequence belongs to the PemK/MazF family. Forms a complex with cognate antitoxin MazE1.

Functionally, toxic component of a type II toxin-antitoxin (TA) system. Acts as an endoribonuclease on single-strand RNA, cleaving between the first and second bases in the sequence UCGCU. Neutralized by coexpression with cognate antitoxin MazE1. This Mycobacterium bovis (strain ATCC BAA-935 / AF2122/97) protein is Endoribonuclease MazF1 (mazF1).